The primary structure comprises 600 residues: UvrABC system protein C (600 aa).

The GIY-YIG domain maps to 15–92 (EKPGCYLMKD…IKKYQPYYNV (78 aa)). Residues 197–232 (TSVKQDLTTKMEKASENLEFERAAEIRDQLKYIEET) form the UVR domain.

The protein belongs to the UvrC family. As to quaternary structure, interacts with UvrB in an incision complex.

It localises to the cytoplasm. In terms of biological role, the UvrABC repair system catalyzes the recognition and processing of DNA lesions. UvrC both incises the 5' and 3' sides of the lesion. The N-terminal half is responsible for the 3' incision and the C-terminal half is responsible for the 5' incision. The polypeptide is UvrABC system protein C (Lactobacillus acidophilus (strain ATCC 700396 / NCK56 / N2 / NCFM)).